The sequence spans 726 residues: Mitotic spindle checkpoint protein MAD1 (726 aa).

Residues 1–30 (MILRTPQPKRLRSDAGESPFPTGATGSGNQ) are disordered. 2 coiled-coil regions span residues 68–246 (ADVL…LKLI) and 272–625 (SDNS…VFAD).

It belongs to the MAD1 family. In terms of assembly, homodimer. Part of the mitotic checkpoint complex (MCC). Interacts with MAD2 and NUA.

The protein localises to the nucleus envelope. In terms of biological role, required for the execution of the mitotic checkpoint which monitors the process of kinetochore-spindle attachment and delays the onset of anaphase when this process is not complete. It inhibits the activity of the anaphase promoting complex by sequestering CDC20 until all chromosomes are aligned at the metaphase plate. Required for anchoring MAD2 to the nuclear envelope. This Arabidopsis thaliana (Mouse-ear cress) protein is Mitotic spindle checkpoint protein MAD1.